Reading from the N-terminus, the 718-residue chain is Phenylalanine--tRNA ligase beta subunit (718 aa).

Residues 39-153 (LNEISGIKFG…IFDLESNPLK (115 aa)) enclose the tRNA-binding domain. The B5 domain maps to 386–460 (SKKTFLDLNY…RFYGLEKLKD (75 aa)). Mg(2+) contacts are provided by D438, D444, and D448.

Belongs to the phenylalanyl-tRNA synthetase beta subunit family. Type 1 subfamily. As to quaternary structure, tetramer of two alpha and two beta subunits. Requires Mg(2+) as cofactor.

It is found in the cytoplasm. The catalysed reaction is tRNA(Phe) + L-phenylalanine + ATP = L-phenylalanyl-tRNA(Phe) + AMP + diphosphate + H(+). This is Phenylalanine--tRNA ligase beta subunit from Mesomycoplasma hyopneumoniae (strain 7448) (Mycoplasma hyopneumoniae).